The primary structure comprises 189 residues: Probable nicotinate-nucleotide adenylyltransferase (189 aa).

This sequence belongs to the NadD family.

The enzyme catalyses nicotinate beta-D-ribonucleotide + ATP + H(+) = deamido-NAD(+) + diphosphate. It participates in cofactor biosynthesis; NAD(+) biosynthesis; deamido-NAD(+) from nicotinate D-ribonucleotide: step 1/1. In terms of biological role, catalyzes the reversible adenylation of nicotinate mononucleotide (NaMN) to nicotinic acid adenine dinucleotide (NaAD). The polypeptide is Probable nicotinate-nucleotide adenylyltransferase (Bacillus mycoides (strain KBAB4) (Bacillus weihenstephanensis)).